The sequence spans 269 residues: Hydroxyethylthiazole kinase (269 aa).

Met45 is a substrate binding site. Residues Arg121 and Thr167 each coordinate ATP. Position 194 (Gly194) interacts with substrate.

The protein belongs to the Thz kinase family. Mg(2+) is required as a cofactor.

The enzyme catalyses 5-(2-hydroxyethyl)-4-methylthiazole + ATP = 4-methyl-5-(2-phosphooxyethyl)-thiazole + ADP + H(+). The protein operates within cofactor biosynthesis; thiamine diphosphate biosynthesis; 4-methyl-5-(2-phosphoethyl)-thiazole from 5-(2-hydroxyethyl)-4-methylthiazole: step 1/1. In terms of biological role, catalyzes the phosphorylation of the hydroxyl group of 4-methyl-5-beta-hydroxyethylthiazole (THZ). The polypeptide is Hydroxyethylthiazole kinase (Geobacillus sp. (strain WCH70)).